A 75-amino-acid polypeptide reads, in one-letter code: Pi-hexatoxin-Hi1a (75 aa).

Intrachain disulfides connect Cys3/Cys18, Cys10/Cys23, Cys17/Cys33, Cys40/Cys55, Cys47/Cys60, and Cys54/Cys71. 2 Domain repeats span residues 3–33 and 40–71; these read CIRKWLSCVDRKNDCCEGLECYKRRHSFEVC and CLVKWKQCDGRERDCCAGLECWKRSGNKSSVC. The interval 3–71 is 2 X approximate repeats with cysteine pattern C-C-CC-C-C; it reads CIRKWLSCVD…KRSGNKSSVC (69 aa).

This sequence belongs to the psalmotoxin-1 family. Double-knot toxin subfamily. As to expression, expressed by the venom gland.

It is found in the secreted. This toxin potently and selectively inhibits ASIC1a (IC(50)=0.4 nM on rASIC1a and IC(50)=0.52 nM on hASIC1a), an isoform of the gene ASIC1. It incompletely inhibits ASIC1a activation in a pH-independent and slowly reversible manner (Tau(off)=14.2 minutes for rASIC1a and 31.8 minutes for hASIC1a). This toxin acts by binding to and stabilizing the closed state of the channel, thereby impeding the transition into a conducting state. This toxin may bind to the acidic pocket of ASIC1a, since mutation of a key residue of this pocket (Arg-350) abolishes the ability of the toxin to inhibit ASIC1a. In addition, it shows antiparasitic activities, since it moderately inhibits the larval development of the major pathogenic nematode of ruminants (H.contortus, IC(50)=22.9 uM). In vivo, this toxin protects the brain from neuronal injury when administered up to 8 hours after stroke onset. The polypeptide is Pi-hexatoxin-Hi1a (Hadronyche infensa (Fraser island funnel-web spider)).